The sequence spans 2381 residues: Protein Ycf2 (2381 aa).

Position 1655–1662 (1655–1662) interacts with ATP; that stretch reads GPMETGRS.

Belongs to the Ycf2 family.

It is found in the plastid. The protein resides in the chloroplast stroma. Functionally, probable ATPase of unknown function. Its presence in a non-photosynthetic plant (Epifagus virginiana) and experiments in tobacco indicate that it has an essential function which is probably not related to photosynthesis. The protein is Protein Ycf2 of Angiopteris evecta (Mule's foot fern).